The chain runs to 417 residues: Adrenocortical dysplasia protein homolog (417 aa).

Positions 11-13 (PWI) match the PWI motif. Residue S25 is modified to Phosphoserine. Residues 156–245 (ESASSSAGLT…SSIDSSQKAQ (90 aa)) form an interaction with POT1 region. 2 stretches are compositionally biased toward polar residues: residues 237 to 250 (SIDS…NPAS) and 259 to 292 (SGAS…TSPR). The tract at residues 237–309 (SIDSSQKAQE…PCSSTPSSPL (73 aa)) is disordered. Positions 296–309 (PSSTPCSSTPSSPL) are enriched in low complexity. Phosphoserine is present on residues S313 and S317. K348 participates in a covalent cross-link: Glycyl lysine isopeptide (Lys-Gly) (interchain with G-Cter in SUMO2).

Component of the shelterin complex (telosome) composed of TERF1, TERF2, TINF2, TERF2IP ACD and POT1. Forms heterodimers with POT1. Identified in a complex with POT1 and single-stranded telomeric DNA. Interacts with STN1 and TINF2.

The protein resides in the nucleus. It is found in the chromosome. Its subcellular location is the telomere. Component of the shelterin complex (telosome) that is involved in the regulation of telomere length and protection. Shelterin associates with arrays of double-stranded TTAGGG repeats added by telomerase and protects chromosome ends. Without its protective activity, telomeres are no longer hidden from the DNA damage surveillance and chromosome ends are inappropriately processed by DNA repair pathways. Promotes binding of POT1 to single-stranded telomeric DNA. Modulates the inhibitory effects of POT1 on telomere elongation. The ACD-POT1 heterodimer enhances telomere elongation by recruiting telomerase to telomeres and increasing its processivity. May play a role in organogenesis. The sequence is that of Adrenocortical dysplasia protein homolog from Rattus norvegicus (Rat).